Here is a 97-residue protein sequence, read N- to C-terminus: Aspartyl/glutamyl-tRNA(Asn/Gln) amidotransferase subunit C (97 aa).

The protein belongs to the GatC family. In terms of assembly, heterotrimer of A, B and C subunits.

It catalyses the reaction L-glutamyl-tRNA(Gln) + L-glutamine + ATP + H2O = L-glutaminyl-tRNA(Gln) + L-glutamate + ADP + phosphate + H(+). The catalysed reaction is L-aspartyl-tRNA(Asn) + L-glutamine + ATP + H2O = L-asparaginyl-tRNA(Asn) + L-glutamate + ADP + phosphate + 2 H(+). Functionally, allows the formation of correctly charged Asn-tRNA(Asn) or Gln-tRNA(Gln) through the transamidation of misacylated Asp-tRNA(Asn) or Glu-tRNA(Gln) in organisms which lack either or both of asparaginyl-tRNA or glutaminyl-tRNA synthetases. The reaction takes place in the presence of glutamine and ATP through an activated phospho-Asp-tRNA(Asn) or phospho-Glu-tRNA(Gln). This is Aspartyl/glutamyl-tRNA(Asn/Gln) amidotransferase subunit C from Prochlorococcus marinus (strain MIT 9303).